The sequence spans 178 residues: ATP-dependent protease subunit HslV (178 aa).

Threonine 7 is an active-site residue. The Na(+) site is built by glycine 162, cysteine 165, and threonine 168.

It belongs to the peptidase T1B family. HslV subfamily. In terms of assembly, a double ring-shaped homohexamer of HslV is capped on each side by a ring-shaped HslU homohexamer. The assembly of the HslU/HslV complex is dependent on binding of ATP.

Its subcellular location is the cytoplasm. It catalyses the reaction ATP-dependent cleavage of peptide bonds with broad specificity.. With respect to regulation, allosterically activated by HslU binding. In terms of biological role, protease subunit of a proteasome-like degradation complex believed to be a general protein degrading machinery. This chain is ATP-dependent protease subunit HslV, found in Burkholderia mallei (strain ATCC 23344).